We begin with the raw amino-acid sequence, 343 residues long: UDP-3-O-acylglucosamine N-acyltransferase 2 (343 aa).

His-251 functions as the Proton acceptor in the catalytic mechanism.

This sequence belongs to the transferase hexapeptide repeat family. LpxD subfamily. As to quaternary structure, homotrimer.

It catalyses the reaction a UDP-3-O-[(3R)-3-hydroxyacyl]-alpha-D-glucosamine + a (3R)-hydroxyacyl-[ACP] = a UDP-2-N,3-O-bis[(3R)-3-hydroxyacyl]-alpha-D-glucosamine + holo-[ACP] + H(+). It participates in bacterial outer membrane biogenesis; LPS lipid A biosynthesis. Its function is as follows. Catalyzes the N-acylation of UDP-3-O-acylglucosamine using 3-hydroxyacyl-ACP as the acyl donor. Is involved in the biosynthesis of lipid A, a phosphorylated glycolipid that anchors the lipopolysaccharide to the outer membrane of the cell. The chain is UDP-3-O-acylglucosamine N-acyltransferase 2 from Legionella pneumophila subsp. pneumophila (strain Philadelphia 1 / ATCC 33152 / DSM 7513).